Here is a 336-residue protein sequence, read N- to C-terminus: Holliday junction branch migration complex subunit RuvB (336 aa).

The segment at M1 to Y182 is large ATPase domain (RuvB-L). ATP contacts are provided by residues L21, R22, G63, K66, T67, S68, E129–F131, R172, Y182, and R219. Residue T67 participates in Mg(2+) binding. The segment at S183–G253 is small ATPAse domain (RuvB-S). The head domain (RuvB-H) stretch occupies residues E256–F336. R310 and R315 together coordinate DNA.

It belongs to the RuvB family. As to quaternary structure, homohexamer. Forms an RuvA(8)-RuvB(12)-Holliday junction (HJ) complex. HJ DNA is sandwiched between 2 RuvA tetramers; dsDNA enters through RuvA and exits via RuvB. An RuvB hexamer assembles on each DNA strand where it exits the tetramer. Each RuvB hexamer is contacted by two RuvA subunits (via domain III) on 2 adjacent RuvB subunits; this complex drives branch migration. In the full resolvosome a probable DNA-RuvA(4)-RuvB(12)-RuvC(2) complex forms which resolves the HJ.

The protein localises to the cytoplasm. The catalysed reaction is ATP + H2O = ADP + phosphate + H(+). The RuvA-RuvB-RuvC complex processes Holliday junction (HJ) DNA during genetic recombination and DNA repair, while the RuvA-RuvB complex plays an important role in the rescue of blocked DNA replication forks via replication fork reversal (RFR). RuvA specifically binds to HJ cruciform DNA, conferring on it an open structure. The RuvB hexamer acts as an ATP-dependent pump, pulling dsDNA into and through the RuvAB complex. RuvB forms 2 homohexamers on either side of HJ DNA bound by 1 or 2 RuvA tetramers; 4 subunits per hexamer contact DNA at a time. Coordinated motions by a converter formed by DNA-disengaged RuvB subunits stimulates ATP hydrolysis and nucleotide exchange. Immobilization of the converter enables RuvB to convert the ATP-contained energy into a lever motion, pulling 2 nucleotides of DNA out of the RuvA tetramer per ATP hydrolyzed, thus driving DNA branch migration. The RuvB motors rotate together with the DNA substrate, which together with the progressing nucleotide cycle form the mechanistic basis for DNA recombination by continuous HJ branch migration. Branch migration allows RuvC to scan DNA until it finds its consensus sequence, where it cleaves and resolves cruciform DNA. The sequence is that of Holliday junction branch migration complex subunit RuvB from Helicobacter pylori (strain J99 / ATCC 700824) (Campylobacter pylori J99).